The chain runs to 104 residues: L-rhamnose mutarotase (104 aa).

Y18 provides a ligand contact to substrate. H22 acts as the Proton donor in catalysis. Residues Y41 and 76 to 77 (WW) each bind substrate.

Belongs to the rhamnose mutarotase family. Homodimer.

It is found in the cytoplasm. It carries out the reaction alpha-L-rhamnose = beta-L-rhamnose. The protein operates within carbohydrate metabolism; L-rhamnose metabolism. Functionally, involved in the anomeric conversion of L-rhamnose. This Lachnoclostridium phytofermentans (strain ATCC 700394 / DSM 18823 / ISDg) (Clostridium phytofermentans) protein is L-rhamnose mutarotase.